A 1486-amino-acid polypeptide reads, in one-letter code: MIERGKFRSLTLINWNGFFARTFDLDELVTTLSGGNGAGKSTTMAAFVTALIPDLTLLHFRNTTEAGATSGSRDKGLHGKLKAGVCYSMLDTINSRHQRVVVGVRLQQVAGRDRKVDIKPFAIQGLPMSVQPTQLVTETLNERQARVLPLNELKDKLEAMEGVQFKQFNSITDYHSLMFELGIIARRLRSASDRSKFYRLIEASLYGGISSAITRSLRDYLLPENSGVRKAFQDMEAALRENRMTLEAIRVTQSDRDLFKHLISEATNYVAADYMRHANERRVHLDKALEFRRELHTSRQQLAAEQYKHVDMARELAEHNGAEGDLEADYQAASDHLNLVQTALRQQEKIERYEADLDELQIRLEEQNEVVAEAIERQEENEARAEAAELEVDELKSQLADYQQALDVQQTRAIQYNQAIAALNRAKELCHLPDLTADSAAEWLETFQAKELEATEKMLSLEQKMSMAQTAHSQFEQAYQLVVAINGPLARNEAWDVARELLREGVDQRHLAEQVQPLRMRLSELEQRLREQQEAERLLADFCKRQGKNFDIDELEALHQELEARIASLSDSVSNAREERMALRQEQEQLQSRIQSLMQRAPVWLAAQNSLNQLSEQCGEEFTSSQDVTEFLQQLLEREREAIVERDEVGARKNAVDEEIERLSQPGGSEDQRLNALAERFGGVLLSEIYDDVSLEDAPYFSALYGPSRHAIVVPDLSQVTEHLEGLTDCPEDLYLIEGDPQSFDDSVFSVDELEKAVVVKIADRQWRYSRFPEVPLFGRAARESRIESLHAEREVLSERFATLSFDVQKTQRLHQAFSRFIGSHLAVAFESDPEAEIRQLNSRRVELERALSNHENDNQQQRIQFEQAKEGVTALNRILPRLNLLADDSLADRVDEIRERLDEAQEAARFVQQFGNQLAKLEPIVSVLQSDPEQFEQLKEDYAYSQQMQRDARQQAFALTEVVQRRAHFSYSDSAEMLSGNSDLNEKLRERLEQAEAERTRAREALRGHAAQLNQYNQVLASLKSSYDTKKELLNDLQRELQDIGVRADSGAEERARIRRDELHAQLSNNRSRRNQLEKALTFCEAEMDNLTRKLRKLERDYFEMREQVVTAKAGWCAVMRMVKDNGVERRLHRRELAYLSADDLRSMSDKALGALRLAVADNEHLRDVLRMSEDPKRPERKIQFFVAVYQHLRERIRQDIIRTDDPVEAIEQMEIELSRLTEELTSREQKLAISSRSVANIIRKTIQREQNRIRMLNQGLQNVSFGQVNSVRLNVNVRETHAMLLDVLSEQHEQHQDLFNSNRLTFSEALAKLYQRLNPQIDMGQRTPQTIGEELLDYRNYLEMEVEVNRGSDGWLRAESGALSTGEAIGTGMSILVMVVQSWEDESRRLRGKDISPCRLLFLDEAARLDARSIATLFELCERLQMQLIIAAPENISPEKGTTYKLVRKVFQNTEHVHVVGLRGFAPQLPETLPGSDEAPSQAS.

34 to 41 (GGNGAGKS) is a binding site for ATP. Coiled-coil stretches lie at residues 326-418 (LEAD…QYNQ), 444-480 (LETF…QAYQ), and 509-603 (RHLA…RAPV). The tract at residues 666 to 783 (PGGSEDQRLN…EVPLFGRAAR (118 aa)) is flexible hinge. Coiled coils occupy residues 835–923 (EAEI…AKLE), 977–1115 (EMLS…TAKA), and 1209–1266 (VEAI…QNVS).

This sequence belongs to the SMC family. MukB subfamily. As to quaternary structure, homodimerization via its hinge domain. Binds to DNA via its C-terminal region. Interacts, and probably forms a ternary complex, with MukE and MukF via its C-terminal region. The complex formation is stimulated by calcium or magnesium. Interacts with tubulin-related protein FtsZ.

Its subcellular location is the cytoplasm. The protein localises to the nucleoid. Functionally, plays a central role in chromosome condensation, segregation and cell cycle progression. Functions as a homodimer, which is essential for chromosome partition. Involved in negative DNA supercoiling in vivo, and by this means organize and compact chromosomes. May achieve or facilitate chromosome segregation by condensation DNA from both sides of a centrally located replisome during cell division. The protein is Chromosome partition protein MukB of Escherichia coli O6:H1 (strain CFT073 / ATCC 700928 / UPEC).